The sequence spans 207 residues: Probable molybdenum cofactor guanylyltransferase (207 aa).

Residues 9 to 11 (LAG), lysine 21, and aspartate 97 each bind GTP. Aspartate 97 serves as a coordination point for Mg(2+).

The protein belongs to the MobA family. The cofactor is Mg(2+).

It is found in the cytoplasm. It carries out the reaction Mo-molybdopterin + GTP + H(+) = Mo-molybdopterin guanine dinucleotide + diphosphate. In terms of biological role, transfers a GMP moiety from GTP to Mo-molybdopterin (Mo-MPT) cofactor (Moco or molybdenum cofactor) to form Mo-molybdopterin guanine dinucleotide (Mo-MGD) cofactor. The sequence is that of Probable molybdenum cofactor guanylyltransferase from Trichormus variabilis (strain ATCC 29413 / PCC 7937) (Anabaena variabilis).